Here is a 660-residue protein sequence, read N- to C-terminus: Iron(3+)-hydroxamate import system permease protein FhuB (660 aa).

The next 18 membrane-spanning stretches (helical) occupy residues 5–25 (IALF…ALTW), 62–82 (LAIS…FQQV), 93–113 (LGVA…AIPG), 118–138 (QFAA…VAWG), 147–167 (ILAG…LVIF), 197–217 (QLLG…LMGL), 240–260 (AIVI…IGLF), 277–297 (LMLA…IILW), 303–323 (MEVS…LWLL), 348–368 (LAFA…ALSF), 391–411 (WPRI…GCII), 424–444 (VLGI…LVPG), 447–467 (FGWL…IIMI), 479–499 (MLLA…MLQA), 528–548 (GIVM…LTIL), 567–587 (IALL…IGPL), 607–627 (MPHI…ADWC), and 635–655 (FQIP…IYLL).

It belongs to the binding-protein-dependent transport system permease family. FecCD subfamily. The complex is composed of two ATP-binding proteins (FhuC), a transmembrane protein (FhuB) and a solute-binding protein (FhuD). FhuB interacts with FhuC. FhuB interacts with FhuD. FhuB binds substrate-loaded FhuD more strongly than FhuD alone.

The protein localises to the cell inner membrane. Part of the ABC transporter complex FhuCDB involved in iron(3+)-hydroxamate import. Responsible for the translocation of the substrate across the membrane. This chain is Iron(3+)-hydroxamate import system permease protein FhuB (fhuB), found in Escherichia coli (strain K12).